A 141-amino-acid chain; its full sequence is Large ribosomal subunit protein uL11 (141 aa).

Belongs to the universal ribosomal protein uL11 family. Part of the ribosomal stalk of the 50S ribosomal subunit. Interacts with L10 and the large rRNA to form the base of the stalk. L10 forms an elongated spine to which L12 dimers bind in a sequential fashion forming a multimeric L10(L12)X complex. One or more lysine residues are methylated.

Functionally, forms part of the ribosomal stalk which helps the ribosome interact with GTP-bound translation factors. This Streptococcus equi subsp. equi (strain 4047) protein is Large ribosomal subunit protein uL11.